A 409-amino-acid chain; its full sequence is uncharacterized protein (409 aa).

H46 provides a ligand contact to Zn(2+). E49 serves as the catalytic Proton acceptor. The Zn(2+) site is built by H50 and E126.

Belongs to the peptidase M16 family. Requires Zn(2+) as cofactor.

This is an uncharacterized protein from Bacillus subtilis (strain 168).